We begin with the raw amino-acid sequence, 309 residues long: Homoserine kinase (309 aa).

91–101 (PIGSGLGSSAC) serves as a coordination point for ATP.

The protein belongs to the GHMP kinase family. Homoserine kinase subfamily.

It localises to the cytoplasm. It carries out the reaction L-homoserine + ATP = O-phospho-L-homoserine + ADP + H(+). It participates in amino-acid biosynthesis; L-threonine biosynthesis; L-threonine from L-aspartate: step 4/5. In terms of biological role, catalyzes the ATP-dependent phosphorylation of L-homoserine to L-homoserine phosphate. The protein is Homoserine kinase of Citrobacter koseri (strain ATCC BAA-895 / CDC 4225-83 / SGSC4696).